The primary structure comprises 419 residues: Argininosuccinate synthase (419 aa).

ATP is bound by residues 9–17 and Ala-35; that span reads AYSGGLDTS. Tyr-86 and Ser-91 together coordinate L-citrulline. 114–122 contacts ATP; it reads AHGATGKGN. Residues Thr-118, Asn-122, and Asp-123 each coordinate L-aspartate. Asn-122 provides a ligand contact to L-citrulline. The L-citrulline site is built by Arg-126, Ser-179, Ser-188, Glu-270, and Tyr-282.

This sequence belongs to the argininosuccinate synthase family. Type 1 subfamily. Homotetramer.

The catalysed reaction is L-citrulline + L-aspartate + ATP = 2-(N(omega)-L-arginino)succinate + AMP + diphosphate + H(+). It participates in amino-acid biosynthesis; L-arginine biosynthesis; L-arginine from L-ornithine and carbamoyl phosphate: step 2/3. It functions in the pathway nitrogen metabolism; urea cycle; (N(omega)-L-arginino)succinate from L-aspartate and L-citrulline: step 1/1. This Drosophila melanogaster (Fruit fly) protein is Argininosuccinate synthase.